The chain runs to 799 residues: MVHRGRTLKSDTDVTSLNASTVSHQSKPFRQFSTRSRAKSNASFKGLRRVLTHDGTLDNDYFNKHNVSQKCKSSDALFRKRTISGLNMTALTRVKSNQGKRSASFHSPVHNTLLSPKNSSHSNTGTAGFGLKPRRSKSTQSVLSLRDAQESKKSESTTDEEVECFSEDNIEDGKVNNDKVIAEHVMPEEKKNVQQLNQNELQSPDSIDEQEEDKSGTDGKENHRAVSLPLPHLSSNNYFGESSHSIEHQKDGETSPSSIETKLNATSVINEEGQSKVTKEADIDDLSSHSQNLRASLVKAGDNISEAPYDKEKKILDVGNTLAAHKSNQKPSHSDEQFDQEDHIDAPRSNSSRKSDSSFMSLRRQSSKQHKLLNEEEDLIKPDDISSAGTKDIEGHSLLENYAPNMILSQSTGVERRFENSSSIQNSLGNEIHDSGEHMASGDTFNELDDGKLRKSKKNGGRSQLGQNIPNSQSTFPTIANIGSKDNNVPQHNFSTSISSLTNNLRRAAPESFHGSRMNNIFHKKGNQNLLLRSNDLNKNSAAPASPLSNEHITSSTNSGSDANRQSNSGAKFNSFAQFLKSDGIDAESRTQRKLWLQRENSIMDLSSQNDGSDSIFMAGNIDAKREFERISHEYSNVKRFYNPLDEALLRVQPIITGNANNIRKKSHNDAQSIAHSSSDTDHKDEDDLLFTNYDKKFDDLYPHLASAKIQAVLSGIWKSESYLFNKDVNPINKNRTTSTNHSVGHTASQNARNLLRGPMGSSTTLHHQRVINSLQPTTRAVNRRMENVGYMHTQPQQR.

The segment at 18–41 is disordered; that stretch reads NASTVSHQSKPFRQFSTRSRAKSN. Phosphothreonine is present on residues threonine 52 and threonine 82. Phosphoserine is present on residues serine 84, serine 104, serine 107, serine 115, and serine 144. The segment covering 97-126 has biased composition (polar residues); the sequence is NQGKRSASFHSPVHNTLLSPKNSSHSNTGT. 2 disordered regions span residues 97-171 and 201-284; these read NQGK…DNIE and LQSP…ADID. Residues 147-156 are compositionally biased toward basic and acidic residues; the sequence is DAQESKKSES. A compositionally biased stretch (acidic residues) spans 157-170; the sequence is TTDEEVECFSEDNI. Residues serine 203 and serine 215 each carry the phosphoserine modification. Positions 213–224 are enriched in basic and acidic residues; sequence DKSGTDGKENHR. Polar residues predominate over residues 233–243; it reads LSSNNYFGESS. The span at 244–253 shows a compositional bias: basic and acidic residues; that stretch reads HSIEHQKDGE. Residues 254–269 show a composition bias toward polar residues; that stretch reads TSPSSIETKLNATSVI. Serine 290 is modified (phosphoserine). The tract at residues 324–391 is disordered; sequence AHKSNQKPSH…PDDISSAGTK (68 aa). Positions 332 to 346 are enriched in basic and acidic residues; the sequence is SHSDEQFDQEDHIDA. The segment covering 348 to 363 has biased composition (low complexity); sequence RSNSSRKSDSSFMSLR. Serine 397 is modified (phosphoserine). 2 disordered regions span residues 418–476 and 538–568; these read FENS…QSTF and NKNS…RQSN. Polar residues-rich tracts occupy residues 420–429 and 461–476; these read NSSSIQNSLG and GRSQ…QSTF. A Phosphoserine modification is found at serine 575. Positions 663–685 are disordered; sequence IRKKSHNDAQSIAHSSSDTDHKD. Serine 707 is modified (phosphoserine).

This sequence belongs to the TORC subunit TCO89 family. In terms of assembly, the target of rapamycin complex 1 (TORC1) is composed of at least KOG1, LST8, TCO89 and either TOR1 (TORC1-A) or TOR2 (TORC1-B). Interacts with PIB2; following activation of PIB2 by glutamine or cysteine. TORC1 binds to and is inhibited by FKBP-rapamycin.

The protein resides in the cell membrane. The protein localises to the vacuole membrane. Functionally, component of TORC1, which regulates multiple cellular processes to control cell growth in response to environmental signals. Nutrient limitation and environmental stress signals cause inactivation of TORC1. Active TORC1 positively controls ribosome biogenesis via control of rRNA, ribosomal protein and tRNA gene expression, and rRNA processing. TORC1 positively controls protein biosynthesis by regulation of mRNA stability, translation initiation factor activity, and high-affinity amino acid permeases that serve to provide amino acids for use by the translation machinery. TORC1 also promotes growth by sequestering a number of nutrient and general stress-responsive transcription factors in the cytoplasm. TORC1 negatively controls macroautophagy, a process to recycle surplus cytoplasmic mass under nutrient starvation conditions. The chain is Target of rapamycin complex 1 subunit TCO89 (TCO89) from Saccharomyces cerevisiae (strain ATCC 204508 / S288c) (Baker's yeast).